The primary structure comprises 217 residues: 3,4-dihydroxy-2-butanone 4-phosphate synthase (217 aa).

D-ribulose 5-phosphate contacts are provided by residues 37–38, Asp42, 150–154, and Glu174; these read RE and RRGHT. Residue Glu38 coordinates Mg(2+). Residue His153 coordinates Mg(2+).

This sequence belongs to the DHBP synthase family. As to quaternary structure, homodimer. It depends on Mg(2+) as a cofactor. Mn(2+) serves as cofactor.

It carries out the reaction D-ribulose 5-phosphate = (2S)-2-hydroxy-3-oxobutyl phosphate + formate + H(+). The protein operates within cofactor biosynthesis; riboflavin biosynthesis; 2-hydroxy-3-oxobutyl phosphate from D-ribulose 5-phosphate: step 1/1. Its function is as follows. Catalyzes the conversion of D-ribulose 5-phosphate to formate and 3,4-dihydroxy-2-butanone 4-phosphate. The polypeptide is 3,4-dihydroxy-2-butanone 4-phosphate synthase (Syntrophotalea carbinolica (strain DSM 2380 / NBRC 103641 / GraBd1) (Pelobacter carbinolicus)).